The following is a 399-amino-acid chain: Elongation factor Tu (399 aa).

The 200-residue stretch at lysine 10–valine 209 folds into the tr-type G domain. The tract at residues glycine 19–threonine 26 is G1. Glycine 19 to threonine 26 is a binding site for GTP. Residue threonine 26 coordinates Mg(2+). Positions glycine 60–alanine 64 are G2. The tract at residues aspartate 81 to glycine 84 is G3. Residues aspartate 81 to histidine 85 and asparagine 136 to aspartate 139 each bind GTP. The interval asparagine 136 to aspartate 139 is G4. The interval serine 174–leucine 176 is G5.

It belongs to the TRAFAC class translation factor GTPase superfamily. Classic translation factor GTPase family. EF-Tu/EF-1A subfamily. As to quaternary structure, monomer.

The protein resides in the cytoplasm. It catalyses the reaction GTP + H2O = GDP + phosphate + H(+). Its function is as follows. GTP hydrolase that promotes the GTP-dependent binding of aminoacyl-tRNA to the A-site of ribosomes during protein biosynthesis. The polypeptide is Elongation factor Tu (Helicobacter acinonychis (strain Sheeba)).